The primary structure comprises 366 residues: Galactoside alpha-(1,2)-fucosyltransferase 1 (366 aa).

Residues 1 to 8 (MWPLSHRH) lie on the Cytoplasmic side of the membrane. The helical; Signal-anchor for type II membrane protein transmembrane segment at 9-25 (LCLAFLLVCVLSAISFF) threads the bilayer. Over 26-366 (LHVHQDSFRH…LSPLWTLAEP (341 aa)) the chain is Lumenal. Residues Asn-66, Asn-302, and Asn-328 are each glycosylated (N-linked (GlcNAc...) asparagine).

This sequence belongs to the glycosyltransferase 11 family.

It localises to the golgi apparatus. It is found in the golgi stack membrane. It carries out the reaction a beta-D-galactosyl-(1-&gt;4)-N-acetyl-beta-D-glucosaminyl derivative + GDP-beta-L-fucose = an alpha-L-Fuc-(1-&gt;2)-beta-D-Gal-(1-&gt;4)-beta-D-GlcNAc derivative + GDP + H(+). The enzyme catalyses a ganglioside GA1 + GDP-beta-L-fucose = a ganglioside Fuc-GA1 + GDP + H(+). It catalyses the reaction a beta-D-Gal-(1-&gt;3)-beta-D-GlcNAc-(1-&gt;3)-beta-D-Gal-(1-&gt;4)-beta-D-Glc-(1&lt;-&gt;1')-Cer(d18:1(4E)) + GDP-beta-L-fucose = alpha-L-fucosyl-(1-&gt;2)- beta-D-galactosyl-(1-&gt;3)-N-acetyl-beta-D-glucosaminyl-(1-&gt;3)-beta-D-galactosyl-(1-&gt;4)-beta-D-glucosyl-(1&lt;-&gt;1')-N-acylsphing-4-enine + GDP + H(+). The catalysed reaction is a neolactoside nLc4Cer(d18:1(4E)) + GDP-beta-L-fucose = a neolactoside IV(2)-alpha-Fuc-nLc4Cer(d18:1(4E)) + GDP + H(+). It carries out the reaction a ganglioside GM1 + GDP-beta-L-fucose = a ganglioside Fuc-GM1 + GDP + H(+). The enzyme catalyses beta-D-galactosyl-(1-&gt;3)-N-acetyl-D-galactosamine + GDP-beta-L-fucose = alpha-L-fucosyl-(1-&gt;2)-beta-D-galactosyl-(1-&gt;3)-N-acetyl-D-galactosamine + GDP + H(+). Its pathway is protein modification; protein glycosylation. In terms of biological role, catalyzes the transfer of L-fucose, from a guanosine diphosphate-beta-L-fucose, to the terminal galactose residue of glycoconjugates through an alpha(1,2) linkage leading to H antigen synthesis that is an intermediate substrate in the synthesis of ABO blood group antigens. H antigen is essential for maturation of the glomerular layer of the main olfactory bulb, in cell migration and early cell-cell contacts during tumor associated angiogenesis. Preferentially fucosylates soluble lactose and to a lesser extent fucosylates glycolipids gangliosides GA1 and GM1a. The polypeptide is Galactoside alpha-(1,2)-fucosyltransferase 1 (Alouatta belzebul (Red-handed howler monkey)).